Reading from the N-terminus, the 1155-residue chain is DNA-directed RNA polymerase subunit beta (1155 aa).

This sequence belongs to the RNA polymerase beta chain family. In terms of assembly, the RNAP catalytic core consists of 2 alpha, 1 beta, 1 beta' and 1 omega subunit. When a sigma factor is associated with the core the holoenzyme is formed, which can initiate transcription.

It carries out the reaction RNA(n) + a ribonucleoside 5'-triphosphate = RNA(n+1) + diphosphate. Functionally, DNA-dependent RNA polymerase catalyzes the transcription of DNA into RNA using the four ribonucleoside triphosphates as substrates. This is DNA-directed RNA polymerase subunit beta from Borrelia garinii subsp. bavariensis (strain ATCC BAA-2496 / DSM 23469 / PBi) (Borreliella bavariensis).